The sequence spans 612 residues: Threonine--tRNA ligase (612 aa).

The catalytic stretch occupies residues 218 to 509; it reads DHRKLGVELG…LSEHFGGNFP (292 aa). Zn(2+)-binding residues include Cys-310, His-361, and His-486.

This sequence belongs to the class-II aminoacyl-tRNA synthetase family. In terms of assembly, homodimer. Zn(2+) is required as a cofactor.

The protein localises to the cytoplasm. The catalysed reaction is tRNA(Thr) + L-threonine + ATP = L-threonyl-tRNA(Thr) + AMP + diphosphate + H(+). Functionally, catalyzes the attachment of threonine to tRNA(Thr) in a two-step reaction: L-threonine is first activated by ATP to form Thr-AMP and then transferred to the acceptor end of tRNA(Thr). Also edits incorrectly charged L-seryl-tRNA(Thr). The sequence is that of Threonine--tRNA ligase from Helicobacter pylori (strain J99 / ATCC 700824) (Campylobacter pylori J99).